The sequence spans 241 residues: Chaperone protein HifB (241 aa).

An N-terminal signal peptide occupies residues 1–27; the sequence is MGKTMFKKTLLFFTALFFTALCAFSAN.

It belongs to the periplasmic pilus chaperone family.

It localises to the periplasm. Functionally, mediates assembly of pili by forming soluble multimeric complexes with pili subunits as an intermediate step in the assembly process. This protein is involved in type B pili (HifA) assembly. This Haemophilus influenzae protein is Chaperone protein HifB (hifB).